The following is a 356-amino-acid chain: GTPase Obg (356 aa).

The 158-residue stretch at 1 to 158 (MFIDSVKITL…RLVRLELKLI (158 aa)) folds into the Obg domain. The OBG-type G domain occupies 159 to 339 (ADVGLVGFPN…LKFMLLEEIK (181 aa)). GTP-binding positions include 165-172 (GFPNVGKS), 190-194 (FTTLT), 212-215 (DIPG), 280-283 (SKSD), and 320-322 (SSL). Mg(2+)-binding residues include Ser172 and Thr192.

It belongs to the TRAFAC class OBG-HflX-like GTPase superfamily. OBG GTPase family. In terms of assembly, monomer. It depends on Mg(2+) as a cofactor.

Its subcellular location is the cytoplasm. An essential GTPase which binds GTP, GDP and possibly (p)ppGpp with moderate affinity, with high nucleotide exchange rates and a fairly low GTP hydrolysis rate. Plays a role in control of the cell cycle, stress response, ribosome biogenesis and in those bacteria that undergo differentiation, in morphogenesis control. The chain is GTPase Obg from Campylobacter jejuni subsp. jejuni serotype O:23/36 (strain 81-176).